Consider the following 242-residue polypeptide: Biosynthetic peptidoglycan transglycosylase (242 aa).

The chain crosses the membrane as a helical span at residues 19–39 (ILAALAVFWGGGIALFSVVPV).

Belongs to the glycosyltransferase 51 family.

It localises to the cell inner membrane. It carries out the reaction [GlcNAc-(1-&gt;4)-Mur2Ac(oyl-L-Ala-gamma-D-Glu-L-Lys-D-Ala-D-Ala)](n)-di-trans,octa-cis-undecaprenyl diphosphate + beta-D-GlcNAc-(1-&gt;4)-Mur2Ac(oyl-L-Ala-gamma-D-Glu-L-Lys-D-Ala-D-Ala)-di-trans,octa-cis-undecaprenyl diphosphate = [GlcNAc-(1-&gt;4)-Mur2Ac(oyl-L-Ala-gamma-D-Glu-L-Lys-D-Ala-D-Ala)](n+1)-di-trans,octa-cis-undecaprenyl diphosphate + di-trans,octa-cis-undecaprenyl diphosphate + H(+). Its pathway is cell wall biogenesis; peptidoglycan biosynthesis. Its function is as follows. Peptidoglycan polymerase that catalyzes glycan chain elongation from lipid-linked precursors. The polypeptide is Biosynthetic peptidoglycan transglycosylase (Salmonella newport (strain SL254)).